A 263-amino-acid polypeptide reads, in one-letter code: uncharacterized protein (263 aa).

It belongs to the A.longa ORF167/ORF288 family.

It localises to the plastid. This is an uncharacterized protein from Euglena longa (Euglenophycean alga).